A 736-amino-acid chain; its full sequence is Probable methionine--tRNA ligase, cytoplasmic (736 aa).

Residues 25–35 (PYVNNVPHLGN) carry the 'HIGH' region motif. Positions 346–350 (KFSKS) match the 'KMSKS' region motif. ATP is bound at residue Lys349. The region spanning 573-680 (PEFPIDMKIA…QSIEAGSKIA (108 aa)) is the tRNA-binding domain.

Belongs to the class-I aminoacyl-tRNA synthetase family.

It is found in the cytoplasm. The enzyme catalyses tRNA(Met) + L-methionine + ATP = L-methionyl-tRNA(Met) + AMP + diphosphate. This Dictyostelium discoideum (Social amoeba) protein is Probable methionine--tRNA ligase, cytoplasmic (metS).